Reading from the N-terminus, the 156-residue chain is Small ribosomal subunit protein uS7 (156 aa).

Belongs to the universal ribosomal protein uS7 family. As to quaternary structure, part of the 30S ribosomal subunit. Contacts proteins S9 and S11.

In terms of biological role, one of the primary rRNA binding proteins, it binds directly to 16S rRNA where it nucleates assembly of the head domain of the 30S subunit. Is located at the subunit interface close to the decoding center, probably blocks exit of the E-site tRNA. The polypeptide is Small ribosomal subunit protein uS7 (Klebsiella pneumoniae (strain 342)).